The sequence spans 278 residues: Embryonic polyadenylate-binding protein 2 (278 aa).

Disordered regions lie at residues 21–66 and 101–128; these read VSSD…GDAG and EGTP…LSPE. Residues 35–50 show a composition bias toward basic and acidic residues; that stretch reads ETKEILGPEGGEGKEE. The segment covering 51–63 has biased composition (acidic residues); sequence KEEEEDAEEDQDG. The RRM domain occupies 147–224; it reads RSVYVGNVDY…RVIKVLPKRT (78 aa). The tract at residues 227–278 is disordered; sequence PGISSTDRGGLRGHPGSRGAPFPHSGLQGRPRLRPQGQNRARGKFSPWFSPY.

As to expression, expressed in various adult tissues.

The protein resides in the cytoplasm. In terms of biological role, binds the poly(A) tail of mRNA. The sequence is that of Embryonic polyadenylate-binding protein 2 (PABPN1L) from Homo sapiens (Human).